Here is a 306-residue protein sequence, read N- to C-terminus: Pantothenate kinase (306 aa).

Position 91-98 (91-98) interacts with ATP; it reads GSVAVGKS.

It belongs to the prokaryotic pantothenate kinase family.

The protein resides in the cytoplasm. The catalysed reaction is (R)-pantothenate + ATP = (R)-4'-phosphopantothenate + ADP + H(+). It functions in the pathway cofactor biosynthesis; coenzyme A biosynthesis; CoA from (R)-pantothenate: step 1/5. This chain is Pantothenate kinase (coaA), found in Streptococcus pyogenes serotype M3 (strain ATCC BAA-595 / MGAS315).